Consider the following 339-residue polypeptide: Fructose-1,6-bisphosphatase isozyme 2 (339 aa).

The tract at residues 3–10 is important for interaction with ALDOA; sequence DRSPFETD. AMP-binding positions include Val-18 and 28 to 32; that span reads TGELT. Residues Asp-69 and Glu-98 each contribute to the Mg(2+) site. Residue 113 to 114 participates in AMP binding; it reads KY. Asp-119, Leu-121, and Asp-122 together coordinate Mg(2+). Residue Asp-122 coordinates substrate. Arg-141 is a binding site for AMP. The short motif at 204 to 208 is the Nuclear localization signal element; sequence KKKGK. Residue 213-216 participates in substrate binding; that stretch reads NEGY. Phosphotyrosine occurs at positions 216 and 219. Substrate-binding positions include 245–249, Tyr-265, and Lys-275; that span reads YVGSM. Glu-281 lines the Mg(2+) pocket.

Belongs to the FBPase class 1 family. As to quaternary structure, homotetramer. Interacts with ALDOA; the interaction blocks inhibition by physiological concentrations of AMP and reduces inhibition by Ca(2+). Interacts with alpha-actinin and F-actin. Mg(2+) serves as cofactor. In terms of tissue distribution, expressed in muscle, intestine, brain and placenta and very weakly in liver.

Its subcellular location is the cell junction. It is found in the cytoplasm. The protein resides in the nucleus. It localises to the myofibril. The protein localises to the sarcomere. Its subcellular location is the z line. It carries out the reaction beta-D-fructose 1,6-bisphosphate + H2O = beta-D-fructose 6-phosphate + phosphate. The protein operates within carbohydrate biosynthesis; gluconeogenesis. With respect to regulation, subject to complex allosteric regulation. The enzyme can assume an active R-state, or an inactive T-state. Intermediate conformations may exist. AMP acts as an allosteric inhibitor. Fructose 2,6-bisphosphate acts as a competitive inhibitor. Strongly inhibited by Ca(2+). In terms of biological role, catalyzes the hydrolysis of fructose 1,6-bisphosphate to fructose 6-phosphate in the presence of divalent cations and probably participates in glycogen synthesis from carbohydrate precursors, such as lactate. The sequence is that of Fructose-1,6-bisphosphatase isozyme 2 (Fbp2) from Mus musculus (Mouse).